A 332-amino-acid chain; its full sequence is Ketol-acid reductoisomerase (NADP(+)) (332 aa).

A KARI N-terminal Rossmann domain is found at 1 to 182 (MAVIYYDKDC…GSNRAGILET (182 aa)). NADP(+) is bound by residues 25–28 (YGAQ) and 83–86 (DTSQ). The active site involves His108. Residue Gly134 participates in NADP(+) binding. The region spanning 183 to 328 (TFAEETETDL…AELRSMMSWL (146 aa)) is the KARI C-terminal knotted domain. Mg(2+) contacts are provided by Asp191, Glu195, Glu227, and Glu231. Ser252 is a binding site for substrate.

It belongs to the ketol-acid reductoisomerase family. Mg(2+) is required as a cofactor.

It carries out the reaction (2R)-2,3-dihydroxy-3-methylbutanoate + NADP(+) = (2S)-2-acetolactate + NADPH + H(+). It catalyses the reaction (2R,3R)-2,3-dihydroxy-3-methylpentanoate + NADP(+) = (S)-2-ethyl-2-hydroxy-3-oxobutanoate + NADPH + H(+). It functions in the pathway amino-acid biosynthesis; L-isoleucine biosynthesis; L-isoleucine from 2-oxobutanoate: step 2/4. The protein operates within amino-acid biosynthesis; L-valine biosynthesis; L-valine from pyruvate: step 2/4. Involved in the biosynthesis of branched-chain amino acids (BCAA). Catalyzes an alkyl-migration followed by a ketol-acid reduction of (S)-2-acetolactate (S2AL) to yield (R)-2,3-dihydroxy-isovalerate. In the isomerase reaction, S2AL is rearranged via a Mg-dependent methyl migration to produce 3-hydroxy-3-methyl-2-ketobutyrate (HMKB). In the reductase reaction, this 2-ketoacid undergoes a metal-dependent reduction by NADPH to yield (R)-2,3-dihydroxy-isovalerate. The sequence is that of Ketol-acid reductoisomerase (NADP(+)) from Dehalococcoides mccartyi (strain ATCC BAA-2100 / JCM 16839 / KCTC 5957 / BAV1).